The chain runs to 358 residues: Tyrosinase ustQ (358 aa).

N28 is a glycosylation site (N-linked (GlcNAc...) asparagine). Residues 37–57 (FVPVYAGLTIISLITVTVSLV) form a helical membrane-spanning segment. N-linked (GlcNAc...) asparagine glycans are attached at residues N91 and N109. H128 and H137 together coordinate Cu cation. N172 and N214 each carry an N-linked (GlcNAc...) asparagine glycan. The Cu cation site is built by H266, H270, and H292. 2 N-linked (GlcNAc...) asparagine glycosylation sites follow: N321 and N325.

Belongs to the tyrosinase family. Cu(2+) serves as cofactor.

The protein localises to the membrane. The enzyme catalyses 2 L-dopa + O2 = 2 L-dopaquinone + 2 H2O. It carries out the reaction L-tyrosine + O2 = L-dopaquinone + H2O. It participates in mycotoxin biosynthesis. In terms of biological role, tyrosinase; part of the gene cluster that mediates the biosynthesis of the secondary metabolite ustiloxin B, an antimitotic tetrapeptide. First, ustA is processed by the subtilisin-like endoprotease Kex2 that is outside the ustiloxin B gene cluster, at the C-terminal side of Arg-Lys, after transfer to Golgi apparatus through the endoplasmic reticulum (ER). Cleavage by KEX2 generates 16 peptides YAIG-I to YAIG-XVI. To process the precursor peptide further, at least two peptidases are necessary to cleave the N-terminal and C-terminal sides of the Tyr-Ala-Ile-Gly core peptide which serves as backbone for the synthesis of ustiloxin B, through cyclization and modification of the tyrosine with a non-protein coding amino acid, norvaline. One of the two peptidases must be the serine peptidase ustP; and the other pepdidase is probably ustH. Macrocyclization of the core peptide derived from ustA requires the tyrosinase ustQ, as well as the homologous oxidases ustYa and ustYb, and leads to the production of the first cyclization product N-desmethylustiloxin F. For the formation of N-desmethylustiloxin F, three oxidation steps are required, hydroxylation at the benzylic position, hydroxylation at either the aromatic ring of Tyr or beta-position of Ile, and oxidative cyclization. UstQ may catalyze the oxidation of a phenol moiety, whereas the ustYa and ustYb are most likely responsible for the remaining two-step oxidations. N-desmethylustiloxin F is then methylated by ustM to yield ustiloxin F which in turn substrate of the cytochrome P450 monooxygenase ustC which catalyzes the formation of S-deoxyustiloxin H. The flavoprotein monooxygenases ustF1 and ustF2 then participate in the modification of the side chain of S-deoxyustiloxin H, leading to the synthesis of an oxime intermediate, via ustiloxin H. Finally, carboxylative dehydration performed by the cysteine desulfurase-like protein ustD yields ustiloxin B. The polypeptide is Tyrosinase ustQ (Aspergillus flavus (strain ATCC 200026 / FGSC A1120 / IAM 13836 / NRRL 3357 / JCM 12722 / SRRC 167)).